Consider the following 365-residue polypeptide: 5-hydroxytryptamine receptor 1E (365 aa).

The Extracellular segment spans residues 1–21; the sequence is MNITNCTTEASMAIRPKTITE. Asn-2 and Asn-5 each carry an N-linked (GlcNAc...) asparagine glycan. A helical membrane pass occupies residues 22 to 45; the sequence is KMLICMTLVVITTLTTLLNLAVIM. The Cytoplasmic portion of the chain corresponds to 46–59; it reads AIGTTKKLHQPANY. A helical membrane pass occupies residues 60 to 84; the sequence is LICSLAVTDLLVAVLVMPLSIIYIV. The Extracellular segment spans residues 85–92; it reads MDRWKLGY. A helical membrane pass occupies residues 93–118; sequence FLCEVWLSVDMTCCTCSILHLCVIAL. A disulfide bridge links Cys-95 with Cys-173. Serotonin contacts are provided by Asp-102 and Cys-106. The short motif at 119-121 is the DRY motif; important for ligand-induced conformation changes element; the sequence is DRY. Topologically, residues 119–138 are cytoplasmic; it reads DRYWAITNAIEYARKRTAKR. A helical transmembrane segment spans residues 139 to 157; that stretch reads AALMILTVWTISIFISMPP. Topologically, residues 158–179 are extracellular; sequence LFWRSHRRLSPPPSQCTIQHDH. A helical transmembrane segment spans residues 180-203; the sequence is VIYTIYSTLGAFYIPLTLILILYY. Over 204 to 291 the chain is Cytoplasmic; it reads RIYHAAKSLY…SSTRERKAAR (88 aa). The helical transmembrane segment at 292–316 threads the bilayer; that stretch reads ILGLILGAFILSWLPFFIKELIVGL. Residues 317-322 lie on the Extracellular side of the membrane; sequence SIYTVS. The helical transmembrane segment at 323 to 345 threads the bilayer; the sequence is SEVADFLTWLGYVNSLINPLLYT. Residues 340 to 344 carry the NPxxY motif; important for ligand-induced conformation changes and signaling motif; the sequence is NPLLY. Residues 346-365 lie on the Cytoplasmic side of the membrane; that stretch reads SFNEDFKLAFKKLIRCREHT.

The protein belongs to the G-protein coupled receptor 1 family. Detected in brain.

The protein localises to the cell membrane. Functionally, G-protein coupled receptor for 5-hydroxytryptamine (serotonin). Also functions as a receptor for various alkaloids and psychoactive substances. Ligand binding causes a conformation change that triggers signaling via guanine nucleotide-binding proteins (G proteins) and modulates the activity of downstream effectors, such as adenylate cyclase. HTR1E is coupled to G(i)/G(o) G alpha proteins and mediates inhibitory neurotransmission by inhibiting adenylate cyclase activity. The protein is 5-hydroxytryptamine receptor 1E of Homo sapiens (Human).